We begin with the raw amino-acid sequence, 182 residues long: Phospholipase A2 inhibitor gamma subunit A2 (182 aa).

8 disulfides stabilise this stretch: cysteine 3–cysteine 27, cysteine 6–cysteine 13, cysteine 20–cysteine 48, cysteine 54–cysteine 75, cysteine 76–cysteine 81, cysteine 99–cysteine 124, cysteine 117–cysteine 146, and cysteine 150–cysteine 172. N-linked (GlcNAc...) asparagine glycosylation is present at asparagine 157.

This sequence belongs to the CNF-like-inhibitor family. Heterodimer of subunit A and subunit B.

The protein resides in the secreted. Phospholipase A2 (PA2) inhibitor. Inhibits the enzymatic activity of PA2 of Deinagkistrodon acutus. Also shows a wide anti-hemorrhage activities to D.acutus, Naja atra and Agkistrodon halys venom. The native protein is more potent than the recombinant one. The polypeptide is Phospholipase A2 inhibitor gamma subunit A2 (Trimerodytes annularis (Red-bellied annulate keelback)).